The chain runs to 91 residues: Small ribosomal subunit protein uS15 (91 aa).

It belongs to the universal ribosomal protein uS15 family. As to quaternary structure, part of the 30S ribosomal subunit. Forms a bridge to the 50S subunit in the 70S ribosome, contacting the 23S rRNA.

Its function is as follows. One of the primary rRNA binding proteins, it binds directly to 16S rRNA where it helps nucleate assembly of the platform of the 30S subunit by binding and bridging several RNA helices of the 16S rRNA. In terms of biological role, forms an intersubunit bridge (bridge B4) with the 23S rRNA of the 50S subunit in the ribosome. The polypeptide is Small ribosomal subunit protein uS15 (Sulfurimonas denitrificans (strain ATCC 33889 / DSM 1251) (Thiomicrospira denitrificans (strain ATCC 33889 / DSM 1251))).